Consider the following 542-residue polypeptide: CTP synthase (542 aa).

The tract at residues 1–264 (MKFIFITGGV…AKLIINKLKL (264 aa)) is amidoligase domain. Residue S12 coordinates CTP. S12 serves as a coordination point for UTP. 13–18 (SLGKGI) is a binding site for ATP. Y53 provides a ligand contact to L-glutamine. D70 contributes to the ATP binding site. Residues D70 and E138 each contribute to the Mg(2+) site. Residues 145–147 (DIE), 185–190 (KTKPTQ), and K221 contribute to the CTP site. UTP-binding positions include 185–190 (KTKPTQ) and K221. 237–239 (KDA) is an ATP binding site. One can recognise a Glutamine amidotransferase type-1 domain in the interval 298–541 (YIMLKDAYTS…VKSALDKKLK (244 aa)). An L-glutamine-binding site is contributed by G359. C386 serves as the catalytic Nucleophile; for glutamine hydrolysis. Residues 387-390 (LGMQ), E410, and R467 each bind L-glutamine. Catalysis depends on residues H514 and E516.

It belongs to the CTP synthase family. Homotetramer.

It carries out the reaction UTP + L-glutamine + ATP + H2O = CTP + L-glutamate + ADP + phosphate + 2 H(+). The enzyme catalyses L-glutamine + H2O = L-glutamate + NH4(+). The catalysed reaction is UTP + NH4(+) + ATP = CTP + ADP + phosphate + 2 H(+). The protein operates within pyrimidine metabolism; CTP biosynthesis via de novo pathway; CTP from UDP: step 2/2. With respect to regulation, allosterically activated by GTP, when glutamine is the substrate; GTP has no effect on the reaction when ammonia is the substrate. The allosteric effector GTP functions by stabilizing the protein conformation that binds the tetrahedral intermediate(s) formed during glutamine hydrolysis. Inhibited by the product CTP, via allosteric rather than competitive inhibition. Its function is as follows. Catalyzes the ATP-dependent amination of UTP to CTP with either L-glutamine or ammonia as the source of nitrogen. Regulates intracellular CTP levels through interactions with the four ribonucleotide triphosphates. This is CTP synthase from Methanococcus aeolicus (strain ATCC BAA-1280 / DSM 17508 / OCM 812 / Nankai-3).